The sequence spans 275 residues: F420-dependent methylenetetrahydromethanopterin dehydrogenase (275 aa).

It belongs to the MTD family.

The catalysed reaction is 5,10-methylenetetrahydromethanopterin + oxidized coenzyme F420-(gamma-L-Glu)(n) + 2 H(+) = 5,10-methenyl-5,6,7,8-tetrahydromethanopterin + reduced coenzyme F420-(gamma-L-Glu)(n). It participates in one-carbon metabolism; methanogenesis from CO(2); 5,10-methylene-5,6,7,8-tetrahydromethanopterin from 5,10-methenyl-5,6,7,8-tetrahydromethanopterin (coenzyme F420 route): step 1/1. Its function is as follows. Catalyzes the reversible reduction of methenyl-H(4)MPT(+) to methylene-H(4)MPT. This chain is F420-dependent methylenetetrahydromethanopterin dehydrogenase, found in Methanobrevibacter smithii (strain ATCC 35061 / DSM 861 / OCM 144 / PS).